The primary structure comprises 343 residues: MTISATEALTRCIEHREIFHDEMLHLMRMLMRGEMSPQIASALLMGLRVKKETVGEITAAAQVMREFATPVVTPNPQDLLDMCGTGGDGSHTFNISTTAMFVAAAVGVPIAKHGNRSASSSSGSADVLEALGANLQLSPQAVAECIEATGIGFMFAPAHHGAMKNVAAVRKELGVRTIFNILGPLTNPAGAANQLMGVFHPDLVGIQVRVLERLGSRHVLVVHGKDGMDEASLGAATLVGELKNGVVREYEIHPEDYGLSMMSNRSIKVSNREQSRELVIEALDNVEGAARDIVALNAGLAIYAGNKADSIESALALAFEMIANGAARAKLEEFCAYTRKFAK.

Residues G84, 87–88 (GD), T92, 94–97 (NIST), 112–120 (KHGNRSASS), and S124 contribute to the 5-phospho-alpha-D-ribose 1-diphosphate site. An anthranilate-binding site is contributed by G84. Position 96 (S96) interacts with Mg(2+). Residue N115 coordinates anthranilate. R170 contacts anthranilate. Residues D229 and E230 each contribute to the Mg(2+) site.

It belongs to the anthranilate phosphoribosyltransferase family. Homodimer. It depends on Mg(2+) as a cofactor.

The catalysed reaction is N-(5-phospho-beta-D-ribosyl)anthranilate + diphosphate = 5-phospho-alpha-D-ribose 1-diphosphate + anthranilate. Its pathway is amino-acid biosynthesis; L-tryptophan biosynthesis; L-tryptophan from chorismate: step 2/5. Catalyzes the transfer of the phosphoribosyl group of 5-phosphorylribose-1-pyrophosphate (PRPP) to anthranilate to yield N-(5'-phosphoribosyl)-anthranilate (PRA). The polypeptide is Anthranilate phosphoribosyltransferase (Bordetella avium (strain 197N)).